The sequence spans 1217 residues: ATP-dependent helicase/nuclease subunit A (1217 aa).

The 466-residue stretch at 10-475 (VIWTDAQWQS…MDLSQNFRSR (466 aa)) folds into the UvrD-like helicase ATP-binding domain. Residue 31–38 (AAAGSGKT) participates in ATP binding. Residues 491–786 (DEQVGEVNYD…RMMTIHSSKG (296 aa)) enclose the UvrD-like helicase C-terminal domain.

Belongs to the helicase family. AddA subfamily. In terms of assembly, heterodimer of AddA and AddB/RexB. Mg(2+) serves as cofactor.

It catalyses the reaction Couples ATP hydrolysis with the unwinding of duplex DNA by translocating in the 3'-5' direction.. The catalysed reaction is ATP + H2O = ADP + phosphate + H(+). In terms of biological role, the heterodimer acts as both an ATP-dependent DNA helicase and an ATP-dependent, dual-direction single-stranded exonuclease. Recognizes the chi site generating a DNA molecule suitable for the initiation of homologous recombination. The AddA nuclease domain is required for chi fragment generation; this subunit has the helicase and 3' -&gt; 5' nuclease activities. In Staphylococcus aureus (strain bovine RF122 / ET3-1), this protein is ATP-dependent helicase/nuclease subunit A.